The following is a 333-amino-acid chain: MKTIYILSIGKLYRGKNGLYFINKDKKKSPIPLESIKEIFILNKVSVTYNALKLLADRNIPIHFFYENTKKGISYYLGSFLPRQKTKSGLVLVKQVEAYKDIEKRTEIALEIVDAIRYNCIKVLEKYHIDEVKELRKIDVWKMFEESLNDWKDAINIIRGIESNIWNLFYQGLDKILKLYKLERRTRRPPKNEANTIVSFANTLLYGVTLTEIYKTHLDPTISFLHELRDTRYSLALDLSENFKPIITFRILIWLVNQGIIKDTHFVKGLNGVLLNEQGKKLVIKEFNKRLDETIKLKSGLKRSMRWYIKAQAYNLERFLLDGRKFKAFRLIY.

Mn(2+) is bound by residues Glu162, His226, and Glu241.

The protein belongs to the CRISPR-associated endonuclease Cas1 family. In terms of assembly, homodimer, forms a heterotetramer with a Cas2 homodimer. Requires Mg(2+) as cofactor. Mn(2+) is required as a cofactor.

Its function is as follows. CRISPR (clustered regularly interspaced short palindromic repeat), is an adaptive immune system that provides protection against mobile genetic elements (viruses, transposable elements and conjugative plasmids). CRISPR clusters contain spacers, sequences complementary to antecedent mobile elements, and target invading nucleic acids. CRISPR clusters are transcribed and processed into CRISPR RNA (crRNA). Acts as a dsDNA endonuclease. Involved in the integration of spacer DNA into the CRISPR cassette. The sequence is that of CRISPR-associated endonuclease Cas1 from Nanoarchaeum equitans (strain Kin4-M).